A 222-amino-acid chain; its full sequence is Ribosomal RNA small subunit methyltransferase I (222 aa).

Belongs to the methyltransferase superfamily. RsmI family.

Its subcellular location is the cytoplasm. It carries out the reaction cytidine(1402) in 16S rRNA + S-adenosyl-L-methionine = 2'-O-methylcytidine(1402) in 16S rRNA + S-adenosyl-L-homocysteine + H(+). In terms of biological role, catalyzes the 2'-O-methylation of the ribose of cytidine 1402 (C1402) in 16S rRNA. The chain is Ribosomal RNA small subunit methyltransferase I from Thermotoga maritima (strain ATCC 43589 / DSM 3109 / JCM 10099 / NBRC 100826 / MSB8).